Consider the following 632-residue polypeptide: tRNA uridine 5-carboxymethylaminomethyl modification enzyme MnmG (632 aa).

FAD is bound by residues 13-18 (GGGHAG), Val-125, and Ser-180. Residue 273-287 (GPRYCPSIEDKINRF) participates in NAD(+) binding. Gln-370 contacts FAD.

The protein belongs to the MnmG family. As to quaternary structure, homodimer. Heterotetramer of two MnmE and two MnmG subunits. The cofactor is FAD.

It localises to the cytoplasm. In terms of biological role, NAD-binding protein involved in the addition of a carboxymethylaminomethyl (cmnm) group at the wobble position (U34) of certain tRNAs, forming tRNA-cmnm(5)s(2)U34. This chain is tRNA uridine 5-carboxymethylaminomethyl modification enzyme MnmG, found in Shewanella sediminis (strain HAW-EB3).